A 59-amino-acid chain; its full sequence is MILYSHLSTLIDIDLSNNIFLAKLPEAYAIFDPLVDVMPVIPVFFLLLAFVWQASVSFR.

The propeptide occupies 1–22 (MILYSHLSTLIDIDLSNNIFLA). A helical transmembrane segment spans residues 30 to 50 (IFDPLVDVMPVIPVFFLLLAF).

It belongs to the PsbK family. In terms of assembly, PSII is composed of 1 copy each of membrane proteins PsbA, PsbB, PsbC, PsbD, PsbE, PsbF, PsbH, PsbI, PsbJ, PsbK, PsbL, PsbM, PsbT, PsbX, PsbY, PsbZ, Psb30/Ycf12, at least 3 peripheral proteins of the oxygen-evolving complex and a large number of cofactors. It forms dimeric complexes.

The protein resides in the plastid. It is found in the chloroplast thylakoid membrane. Functionally, one of the components of the core complex of photosystem II (PSII). PSII is a light-driven water:plastoquinone oxidoreductase that uses light energy to abstract electrons from H(2)O, generating O(2) and a proton gradient subsequently used for ATP formation. It consists of a core antenna complex that captures photons, and an electron transfer chain that converts photonic excitation into a charge separation. This chain is Photosystem II reaction center protein K, found in Chara vulgaris (Common stonewort).